Reading from the N-terminus, the 209-residue chain is C-type lectin domain family 6 member A (209 aa).

Over 1–20 the chain is Cytoplasmic; sequence MVQERQSQGKGVCWTLRLWS. A helical; Signal-anchor for type II membrane protein transmembrane segment spans residues 21 to 43; that stretch reads AAVISMLLLSTCFIASCVVTYQF. Over 44 to 209 the chain is Extracellular; the sequence is IMDQPSRRLY…SICEMKKIYL (166 aa). 4 disulfides stabilise this stretch: Cys-64/Cys-78, Cys-79/Cys-90, Cys-107/Cys-202, and Cys-176/Cys-194. The C-type lectin domain occupies 86–203; that stretch reads FGSSCYLIST…CDSKHNSICE (118 aa). Val-116, Asn-118, and Glu-122 together coordinate Ca(2+). Asn-131 carries an N-linked (GlcNAc...) asparagine glycan. Ca(2+) contacts are provided by Glu-168, Asn-170, and Glu-174. Alpha-D-mannopyranose-binding positions include 168 to 170, Glu-174, Trp-182, and 190 to 191; these read EPN and ND. Ca(2+)-binding residues include Asn-190, Asp-191, and Glu-203.

Associated with FCER1G. Heterodimer with CLEC4D; this heterodimer forms a pattern recognition receptor (PRR) against fungal infection. As to expression, expressed by the XS52 DC (dendritic cell) line (at protein level). Expressed constitutively by the epidermis, and skin resident DC appear to be the major source of this expression. Expressed in the spleen and thymus. Expression was undetectable in non-DC lines, including macrophage lines (J774 and Raw), T-cell lines (7-17, HDK-1, and D10), B-cell hybridoma (5C5), a keratinocyte line (Pam 212), and a fibroblast line (NS01).

It localises to the cell membrane. In terms of biological role, calcium-dependent lectin that acts as a pattern recognition receptor (PRR) of the innate immune system: specifically recognizes and binds alpha-mannans on C.albicans hypheas. Binding of C.albicans alpha-mannans to this receptor complex leads to phosphorylation of the immunoreceptor tyrosine-based activation motif (ITAM) of FCER1G, triggering activation of SYK, CARD9 and NF-kappa-B, consequently driving maturation of antigen-presenting cells and shaping antigen-specific priming of T-cells toward effector T-helper 1 and T-helper 17 cell subtypes. Also recognizes, in a mannose-dependent manner, allergens from house dust mite and fungi, by promoting cysteinyl leukotriene production. Recognizes soluble elements from the eggs of Shistosoma mansoni altering adaptive immune responses. The chain is C-type lectin domain family 6 member A from Mus musculus (Mouse).